An 89-amino-acid chain; its full sequence is Putative defensin-like protein 89 (89 aa).

The N-terminal stretch at 1-25 (MGFKNNLSLVSVMVFALILLPMISG) is a signal peptide. 4 disulfides stabilise this stretch: Cys30/Cys66, Cys36/Cys57, Cys42/Cys64, and Cys46/Cys65.

Belongs to the DEFL family.

The protein localises to the secreted. The protein is Putative defensin-like protein 89 of Arabidopsis thaliana (Mouse-ear cress).